The following is a 90-amino-acid chain: Small ribosomal subunit protein uS15c (90 aa).

It belongs to the universal ribosomal protein uS15 family. As to quaternary structure, part of the 30S ribosomal subunit.

It localises to the plastid. It is found in the chloroplast. This chain is Small ribosomal subunit protein uS15c (rps15), found in Drimys granadensis.